The sequence spans 78 residues: Small ribosomal subunit protein bS16 (78 aa).

This sequence belongs to the bacterial ribosomal protein bS16 family.

In Maridesulfovibrio salexigens (strain ATCC 14822 / DSM 2638 / NCIMB 8403 / VKM B-1763) (Desulfovibrio salexigens), this protein is Small ribosomal subunit protein bS16.